Reading from the N-terminus, the 309-residue chain is Acetyl-coenzyme A carboxylase carboxyl transferase subunit beta (309 aa).

The region spanning 27–296 (LWKKCPKCGA…PGTEAPIEFE (270 aa)) is the CoA carboxyltransferase N-terminal domain. 4 residues coordinate Zn(2+): cysteine 31, cysteine 34, cysteine 50, and cysteine 53. The segment at 31-53 (CPKCGAFLYKPELEKNLDVCPKC) adopts a C4-type zinc-finger fold. The tract at residues 288-309 (GTEAPIEFEVTEKPDVDEPEGQ) is disordered.

This sequence belongs to the AccD/PCCB family. Acetyl-CoA carboxylase is a heterohexamer composed of biotin carboxyl carrier protein (AccB), biotin carboxylase (AccC) and two subunits each of ACCase subunit alpha (AccA) and ACCase subunit beta (AccD). The cofactor is Zn(2+).

The protein localises to the cytoplasm. It carries out the reaction N(6)-carboxybiotinyl-L-lysyl-[protein] + acetyl-CoA = N(6)-biotinyl-L-lysyl-[protein] + malonyl-CoA. It participates in lipid metabolism; malonyl-CoA biosynthesis; malonyl-CoA from acetyl-CoA: step 1/1. Its function is as follows. Component of the acetyl coenzyme A carboxylase (ACC) complex. Biotin carboxylase (BC) catalyzes the carboxylation of biotin on its carrier protein (BCCP) and then the CO(2) group is transferred by the transcarboxylase to acetyl-CoA to form malonyl-CoA. This chain is Acetyl-coenzyme A carboxylase carboxyl transferase subunit beta, found in Marinobacter nauticus (strain ATCC 700491 / DSM 11845 / VT8) (Marinobacter aquaeolei).